A 581-amino-acid chain; its full sequence is Protein FAM83D (581 aa).

The DUF1669 stretch occupies residues 1-297 (MALRYDGLDE…LYAQSKPISS (297 aa)). The tract at residues 75–101 (PGEEGAAAGAEDSFGSSHDCSSGTYFP) is disordered. Positions 88–98 (FGSSHDCSSGT) are enriched in polar residues. Ser296 carries the post-translational modification Phosphoserine. Residues 338-581 (TPRKVELGGE…REIMLYPSYQ (244 aa)) form a required for interaction with KIF22 and function in chromosome congression region. 2 disordered regions span residues 366-401 (EDYFSSRKDRLEGRRVTDAATQTEPGETPAVSMSDV) and 426-503 (QTVV…GPPK). A compositionally biased stretch (basic and acidic residues) spans 369–382 (FSSRKDRLEGRRVT). Residues 426-438 (QTVVPTTSATTQT) are compositionally biased toward low complexity. A Phosphoserine modification is found at Ser456. Residues 462-488 (SVSRSSSLRSSSSLSSQGSVASSIGSQ) show a composition bias toward low complexity. Thr507 bears the Phosphothreonine mark.

The protein belongs to the FAM83 family. As to quaternary structure, interacts with FBXW7; promotes FBXW7 degradation. May interact with RAF1. Interacts with KIF22; recruits KIF22 to mitotic spindle microtubules. Interacts (via C-terminus) with DYNLL1. Interacts with HMMR. Directly interacts (via DUF1669) with CSNK1A1 and CSNK1A1L. Phosphorylated during mitosis.

The protein resides in the cytoplasm. The protein localises to the cytoskeleton. Its subcellular location is the spindle. It localises to the spindle pole. In terms of biological role, through the degradation of FBXW7, may act indirectly on the expression and downstream signaling of MTOR, JUN and MYC. May play also a role in cell proliferation through activation of the ERK1/ERK2 signaling cascade. May also be important for proper chromosome congression and alignment during mitosis through its interaction with KIF22. This is Protein FAM83D from Bos taurus (Bovine).